A 159-amino-acid polypeptide reads, in one-letter code: SsrA-binding protein (159 aa).

The protein belongs to the SmpB family.

It is found in the cytoplasm. Its function is as follows. Required for rescue of stalled ribosomes mediated by trans-translation. Binds to transfer-messenger RNA (tmRNA), required for stable association of tmRNA with ribosomes. tmRNA and SmpB together mimic tRNA shape, replacing the anticodon stem-loop with SmpB. tmRNA is encoded by the ssrA gene; the 2 termini fold to resemble tRNA(Ala) and it encodes a 'tag peptide', a short internal open reading frame. During trans-translation Ala-aminoacylated tmRNA acts like a tRNA, entering the A-site of stalled ribosomes, displacing the stalled mRNA. The ribosome then switches to translate the ORF on the tmRNA; the nascent peptide is terminated with the 'tag peptide' encoded by the tmRNA and targeted for degradation. The ribosome is freed to recommence translation, which seems to be the essential function of trans-translation. The chain is SsrA-binding protein from Coxiella burnetii (strain CbuG_Q212) (Coxiella burnetii (strain Q212)).